A 291-amino-acid chain; its full sequence is Kidney mitochondrial carrier protein 1 (291 aa).

Residue Ser-2 is modified to N-acetylserine. 3 Solcar repeats span residues 7 to 96, 104 to 189, and 198 to 289; these read KPFV…LKRL, ETLP…TKKH, and DTVY…LKKL. Helical transmembrane passes span 9 to 26, 71 to 89, 105 to 124, 164 to 183, 204 to 224, and 264 to 283; these read FVYG…TFPI, GIAP…KIGT, TLPI…STIA, GVSL…LPVY, FLSS…VDVV, and GFWP…FVTY.

Belongs to the mitochondrial carrier (TC 2.A.29) family. Interacts with VDAC1.

It localises to the mitochondrion inner membrane. The enzyme catalyses sulfite(in) + sulfate(out) = sulfite(out) + sulfate(in). It carries out the reaction thiosulfate(in) + sulfate(out) = thiosulfate(out) + sulfate(in). It catalyses the reaction sulfate(out) + phosphate(in) = sulfate(in) + phosphate(out). The catalysed reaction is oxalate(in) + sulfate(out) = oxalate(out) + sulfate(in). The enzyme catalyses malonate(in) + sulfate(out) = malonate(out) + sulfate(in). It carries out the reaction maleate(in) + sulfate(out) = maleate(out) + sulfate(in). It catalyses the reaction (S)-malate(in) + sulfate(out) = (S)-malate(out) + sulfate(in). The catalysed reaction is (3S)-citramalate(in) + sulfate(out) = (3S)-citramalate(out) + sulfate(in). The enzyme catalyses (3R)-citramalate(in) + sulfate(out) = (3R)-citramalate(out) + sulfate(in). It carries out the reaction sulfate(out) + succinate(in) = sulfate(in) + succinate(out). It catalyses the reaction (S,S)-tartrate(in) + sulfate(out) = (S,S)-tartrate(out) + sulfate(in). The catalysed reaction is (2R,3R)-tartrate(in) + sulfate(out) = (2R,3R)-tartrate(out) + sulfate(in). The enzyme catalyses D-aspartate(in) + sulfate(out) = D-aspartate(out) + sulfate(in). It carries out the reaction L-aspartate(in) + sulfate(out) = L-aspartate(out) + sulfate(in). It catalyses the reaction sulfate(in) = sulfate(out). The catalysed reaction is phosphate(in) = phosphate(out). The enzyme catalyses (S)-malate(out) = (S)-malate(in). Increased activity at pH 6.0. sulfate/sulfate exchange activity is inhibited strongly by pyridoxal 5'-phosphate, bathophenanthroline and the organic mercurials mersalyl, p-chloromercuribenzoate and HgCl2. Its function is as follows. Antiporter that transports inorganic anions (sulfate, sulfite, thiosulfate and phosphate) and, to a lesser extent, a variety of dicarboxylates (e.g. malonate, malate and citramalate) and, even more so, aspartate. The sulfate/sulfate exchange is much higher than the phosphate/phosphate and malate/malate exchanges. The transport affinities is higher for sulfate and thiosulfate than for any other substrate. May catalyze the export of sulfite and thiosulfate (the hydrogen sulfide degradation products) from the mitochondria, thereby modulating the level of the hydrogen sulfide. Also may mediate a very low unidirectional transport of sulfate, phosphate and (S)-malate. In Homo sapiens (Human), this protein is Kidney mitochondrial carrier protein 1.